A 129-amino-acid polypeptide reads, in one-letter code: Cytochrome c oxidase subunit 5B, mitochondrial (129 aa).

Residues 1–31 constitute a mitochondrion transit peptide; it reads MASRLLRGAGALAAQALRARGPSGAAAVRSM. 2 positions are modified to N6-acetyllysine: Lys-68 and Lys-86. Zn(2+) contacts are provided by Cys-91, Cys-93, Cys-113, and Cys-116. Residue Lys-121 is modified to N6-acetyllysine.

Belongs to the cytochrome c oxidase subunit 5B family. As to quaternary structure, component of the cytochrome c oxidase (complex IV, CIV), a multisubunit enzyme composed of 14 subunits. The complex is composed of a catalytic core of 3 subunits MT-CO1, MT-CO2 and MT-CO3, encoded in the mitochondrial DNA, and 11 supernumerary subunits COX4I, COX5A, COX5B, COX6A, COX6B, COX6C, COX7A, COX7B, COX7C, COX8 and NDUFA4, which are encoded in the nuclear genome. The complex exists as a monomer or a dimer and forms supercomplexes (SCs) in the inner mitochondrial membrane with NADH-ubiquinone oxidoreductase (complex I, CI) and ubiquinol-cytochrome c oxidoreductase (cytochrome b-c1 complex, complex III, CIII), resulting in different assemblies (supercomplex SCI(1)III(2)IV(1) and megacomplex MCI(2)III(2)IV(2)).

It localises to the mitochondrion inner membrane. It functions in the pathway energy metabolism; oxidative phosphorylation. In terms of biological role, component of the cytochrome c oxidase, the last enzyme in the mitochondrial electron transport chain which drives oxidative phosphorylation. The respiratory chain contains 3 multisubunit complexes succinate dehydrogenase (complex II, CII), ubiquinol-cytochrome c oxidoreductase (cytochrome b-c1 complex, complex III, CIII) and cytochrome c oxidase (complex IV, CIV), that cooperate to transfer electrons derived from NADH and succinate to molecular oxygen, creating an electrochemical gradient over the inner membrane that drives transmembrane transport and the ATP synthase. Cytochrome c oxidase is the component of the respiratory chain that catalyzes the reduction of oxygen to water. Electrons originating from reduced cytochrome c in the intermembrane space (IMS) are transferred via the dinuclear copper A center (CU(A)) of subunit 2 and heme A of subunit 1 to the active site in subunit 1, a binuclear center (BNC) formed by heme A3 and copper B (CU(B)). The BNC reduces molecular oxygen to 2 water molecules using 4 electrons from cytochrome c in the IMS and 4 protons from the mitochondrial matrix. This Pongo abelii (Sumatran orangutan) protein is Cytochrome c oxidase subunit 5B, mitochondrial (COX5B).